The primary structure comprises 143 residues: Hemoglobin subunit alpha (143 aa).

The 142-residue stretch at 2–143 (VLSPADKTNV…VSTVLVSKYR (142 aa)) folds into the Globin domain. Residue Ser4 is modified to Phosphoserine. Lys8 carries the N6-succinyllysine modification. Thr9 is subject to Phosphothreonine. Position 12 is an N6-succinyllysine (Lys12). Lys17 carries the N6-acetyllysine; alternate modification. Position 17 is an N6-succinyllysine; alternate (Lys17). The residue at position 25 (Tyr25) is a Phosphotyrosine. Ser36 bears the Phosphoserine mark. Lys41 is subject to N6-succinyllysine. Ser51 carries the post-translational modification Phosphoserine. His60 contributes to the O2 binding site. His89 serves as a coordination point for heme b. Ser104 is modified (phosphoserine). Position 110 is a phosphothreonine (Thr110). Phosphoserine is present on Ser126. Thr136 carries the phosphothreonine modification. Ser140 is modified (phosphoserine).

Belongs to the globin family. Heterotetramer of two alpha chains and two beta chains. In terms of tissue distribution, red blood cells.

In terms of biological role, involved in oxygen transport from the lung to the various peripheral tissues. Its function is as follows. Hemopressin acts as an antagonist peptide of the cannabinoid receptor CNR1. Hemopressin-binding efficiently blocks cannabinoid receptor CNR1 and subsequent signaling. The protein is Hemoglobin subunit alpha (HBA) of Pipistrellus abramus (Japanese pipistrelle).